Reading from the N-terminus, the 425-residue chain is Serine--tRNA ligase (425 aa).

228–230 (TAE) is an L-serine binding site. Residue 259–261 (RSE) coordinates ATP. E282 lines the L-serine pocket. 346–349 (EIAS) provides a ligand contact to ATP. S382 lines the L-serine pocket.

This sequence belongs to the class-II aminoacyl-tRNA synthetase family. Type-1 seryl-tRNA synthetase subfamily. As to quaternary structure, homodimer. The tRNA molecule binds across the dimer.

It is found in the cytoplasm. The catalysed reaction is tRNA(Ser) + L-serine + ATP = L-seryl-tRNA(Ser) + AMP + diphosphate + H(+). It carries out the reaction tRNA(Sec) + L-serine + ATP = L-seryl-tRNA(Sec) + AMP + diphosphate + H(+). It functions in the pathway aminoacyl-tRNA biosynthesis; selenocysteinyl-tRNA(Sec) biosynthesis; L-seryl-tRNA(Sec) from L-serine and tRNA(Sec): step 1/1. Functionally, catalyzes the attachment of serine to tRNA(Ser). Is also able to aminoacylate tRNA(Sec) with serine, to form the misacylated tRNA L-seryl-tRNA(Sec), which will be further converted into selenocysteinyl-tRNA(Sec). The chain is Serine--tRNA ligase from Rickettsia canadensis (strain McKiel).